The following is a 397-amino-acid chain: Elongation factor Tu-1 (397 aa).

The 197-residue stretch at 10–206 (KPHVNIGTIG…AVDENIPEPE (197 aa)) folds into the tr-type G domain. Positions 19-26 (GHIDHGKT) are G1. 19-26 (GHIDHGKT) is a binding site for GTP. Threonine 26 contributes to the Mg(2+) binding site. The interval 62–66 (GITIS) is G2. The G3 stretch occupies residues 83–86 (DCPG). GTP is bound by residues 83–87 (DCPGH) and 138–141 (NKAD). The interval 138–141 (NKAD) is G4. A G5 region spans residues 176 to 178 (SAL). Threonine 386 carries the post-translational modification Phosphothreonine.

It belongs to the TRAFAC class translation factor GTPase superfamily. Classic translation factor GTPase family. EF-Tu/EF-1A subfamily. Monomer. Post-translationally, phosphorylated on threonine and serine.

The protein localises to the cytoplasm. The catalysed reaction is GTP + H2O = GDP + phosphate + H(+). In terms of biological role, GTP hydrolase that promotes the GTP-dependent binding of aminoacyl-tRNA to the A-site of ribosomes during protein biosynthesis. This is Elongation factor Tu-1 from Streptomyces collinus.